The primary structure comprises 427 residues: Protein TolB homolog (427 aa).

An N-terminal signal peptide occupies residues 1–20; sequence MLRRIFVSTFLVFGIVSLYA.

It belongs to the TolB family.

It is found in the periplasm. The polypeptide is Protein TolB homolog (Chlamydia caviae (strain ATCC VR-813 / DSM 19441 / 03DC25 / GPIC) (Chlamydophila caviae)).